The following is a 91-amino-acid chain: UPF0213 protein NGO_1598 (91 aa).

The GIY-YIG domain maps to 4 to 83 (SNWSVYLILC…AAQKRQLWEQ (80 aa)).

It belongs to the UPF0213 family.

This chain is UPF0213 protein NGO_1598, found in Neisseria gonorrhoeae (strain ATCC 700825 / FA 1090).